We begin with the raw amino-acid sequence, 88 residues long: Large ribosomal subunit protein bL27 (88 aa).

The disordered stretch occupies residues 1–25 (MAHKKGASSSRNGRDSNAQRLGVKR). The span at 7–19 (ASSSRNGRDSNAQ) shows a compositional bias: polar residues.

It belongs to the bacterial ribosomal protein bL27 family.

This is Large ribosomal subunit protein bL27 from Nocardia farcinica (strain IFM 10152).